The chain runs to 219 residues: Cytidylate kinase (219 aa).

Residue Gly-15–Thr-23 coordinates ATP.

It belongs to the cytidylate kinase family. Type 1 subfamily.

Its subcellular location is the cytoplasm. It catalyses the reaction CMP + ATP = CDP + ADP. The enzyme catalyses dCMP + ATP = dCDP + ADP. The polypeptide is Cytidylate kinase (Brucella melitensis biotype 2 (strain ATCC 23457)).